Consider the following 511-residue polypeptide: Probable lipid II flippase MurJ (511 aa).

13 consecutive transmembrane segments (helical) span residues 31-51, 90-110, 130-150, 159-179, 182-202, 237-257, 271-291, 314-334, 354-374, 383-403, 407-427, 443-463, and 481-501; these read IFGA…PNLL, LLTL…PWVI, LLKI…VGAI, IPAF…LFAA, FNPP…LQLV, ILGV…ASFL, LMEF…LPSL, CFLL…PLTV, LIAY…APGF, PVKI…AFIG, HAGL…LLYW, AFLL…LGML, and LMAV…VLGF.

The protein belongs to the MurJ/MviN family.

The protein localises to the cell inner membrane. The protein operates within cell wall biogenesis; peptidoglycan biosynthesis. In terms of biological role, involved in peptidoglycan biosynthesis. Transports lipid-linked peptidoglycan precursors from the inner to the outer leaflet of the cytoplasmic membrane. The protein is Probable lipid II flippase MurJ of Escherichia coli O157:H7.